The sequence spans 92 residues: Small ribosomal subunit protein uS19 (92 aa).

It belongs to the universal ribosomal protein uS19 family.

Functionally, protein S19 forms a complex with S13 that binds strongly to the 16S ribosomal RNA. The sequence is that of Small ribosomal subunit protein uS19 from Rickettsia akari (strain Hartford).